A 313-amino-acid chain; its full sequence is Ribosomal RNA small subunit methyltransferase H (313 aa).

S-adenosyl-L-methionine-binding positions include 34-36 (GGH), Asp-54, Phe-81, Asp-102, and Gln-109. The disordered stretch occupies residues 289–313 (IAGPEETDRNPRARSAKLRAAEKLG).

Belongs to the methyltransferase superfamily. RsmH family.

Its subcellular location is the cytoplasm. It carries out the reaction cytidine(1402) in 16S rRNA + S-adenosyl-L-methionine = N(4)-methylcytidine(1402) in 16S rRNA + S-adenosyl-L-homocysteine + H(+). Functionally, specifically methylates the N4 position of cytidine in position 1402 (C1402) of 16S rRNA. This chain is Ribosomal RNA small subunit methyltransferase H, found in Trichlorobacter lovleyi (strain ATCC BAA-1151 / DSM 17278 / SZ) (Geobacter lovleyi).